Reading from the N-terminus, the 268-residue chain is Glutamate racemase (268 aa).

Residues 14–15 and 46–47 contribute to the substrate site; these read DS and YG. The active-site Proton donor/acceptor is Cys78. 79 to 80 is a binding site for substrate; it reads NS. Residue Cys190 is the Proton donor/acceptor of the active site. Substrate is bound at residue 191–192; it reads TH.

Belongs to the aspartate/glutamate racemases family.

It catalyses the reaction L-glutamate = D-glutamate. It functions in the pathway cell wall biogenesis; peptidoglycan biosynthesis. Functionally, provides the (R)-glutamate required for cell wall biosynthesis. The sequence is that of Glutamate racemase from Treponema pallidum (strain Nichols).